Reading from the N-terminus, the 240-residue chain is Ubiquinone biosynthesis O-methyltransferase (240 aa).

Arg44, Gly64, Asp85, and Met129 together coordinate S-adenosyl-L-methionine.

This sequence belongs to the methyltransferase superfamily. UbiG/COQ3 family.

The catalysed reaction is a 3-demethylubiquinol + S-adenosyl-L-methionine = a ubiquinol + S-adenosyl-L-homocysteine + H(+). It catalyses the reaction a 3-(all-trans-polyprenyl)benzene-1,2-diol + S-adenosyl-L-methionine = a 2-methoxy-6-(all-trans-polyprenyl)phenol + S-adenosyl-L-homocysteine + H(+). It participates in cofactor biosynthesis; ubiquinone biosynthesis. O-methyltransferase that catalyzes the 2 O-methylation steps in the ubiquinone biosynthetic pathway. The polypeptide is Ubiquinone biosynthesis O-methyltransferase (Escherichia coli (strain ATCC 8739 / DSM 1576 / NBRC 3972 / NCIMB 8545 / WDCM 00012 / Crooks)).